The following is a 534-amino-acid chain: Nucleolar protein 58 (534 aa).

Thr-34 carries the post-translational modification Phosphothreonine. At Ser-109 the chain carries Phosphoserine. Lys-157 participates in a covalent cross-link: Glycyl lysine isopeptide (Lys-Gly) (interchain with G-Cter in SUMO2). In terms of domain architecture, Nop spans 282–400; sequence IAPNVTVMVG…LEARLRILED (119 aa). Phosphoserine is present on residues Ser-304 and Ser-351. Glycyl lysine isopeptide (Lys-Gly) (interchain with G-Cter in SUMO2) cross-links involve residues Lys-353, Lys-411, Lys-415, Lys-422, Lys-426, Lys-441, Lys-444, and Lys-465. Lys-467 participates in a covalent cross-link: Glycyl lysine isopeptide (Lys-Gly) (interchain with G-Cter in SUMO); alternate. A Glycyl lysine isopeptide (Lys-Gly) (interchain with G-Cter in SUMO1); alternate cross-link involves residue Lys-467. Residue Lys-467 forms a Glycyl lysine isopeptide (Lys-Gly) (interchain with G-Cter in SUMO2); alternate linkage. Acidic residues predominate over residues 470–486; that stretch reads VEEEMEEAEEEQVVEEE. Residues 470-534 form a disordered region; sequence VEEEMEEAEE…KKKKKKDAED (65 aa). Lys-490 is covalently cross-linked (Glycyl lysine isopeptide (Lys-Gly) (interchain with G-Cter in SUMO2)). Basic residues predominate over residues 490–500; the sequence is KKKKKKDKKKH. A Glycyl lysine isopeptide (Lys-Gly) (interchain with G-Cter in SUMO); alternate cross-link involves residue Lys-502. Residue Lys-502 forms a Glycyl lysine isopeptide (Lys-Gly) (interchain with G-Cter in SUMO2); alternate linkage. Ser-507 and Ser-519 each carry phosphoserine. Residues 522–534 show a composition bias toward basic residues; that stretch reads KKKKKKKKKDAED.

It belongs to the NOP5/NOP56 family. In terms of assembly, core component of box C/D small nucleolar ribonucleoprotein (snoRNP) particles; the core proteins SNU13, NOP56, NOP58 and FBL or FBLL1 assemble stepwise onto the snoRNA. Interacts with NOLC1/Nopp140. Interacts with NOPCHAP1, NUFIP1, RUVBL1 and RUVBL2; NOPCHAP1 bridges the association of NOP58 with RUVBL1:RUVBL2 and NUFIP1. Interacts with PIH1D1. Part of the small subunit (SSU) processome, composed of more than 70 proteins and the RNA chaperone small nucleolar RNA (snoRNA) U3. In terms of processing, sumoylation is essential for high-affinity binding to snoRNAs.

The protein resides in the nucleus. The protein localises to the nucleolus. Its subcellular location is the nucleoplasm. Its function is as follows. Required for the biogenesis of box C/D snoRNAs such as U3, U8 and U14 snoRNAs. Part of the small subunit (SSU) processome, first precursor of the small eukaryotic ribosomal subunit. During the assembly of the SSU processome in the nucleolus, many ribosome biogenesis factors, an RNA chaperone and ribosomal proteins associate with the nascent pre-rRNA and work in concert to generate RNA folding, modifications, rearrangements and cleavage as well as targeted degradation of pre-ribosomal RNA by the RNA exosome. Core component of box C/D small nucleolar ribonucleoprotein (snoRNP) complexes that function in methylation of multiple sites on ribosomal RNAs (rRNAs) and messenger RNAs (mRNAs). This Rattus norvegicus (Rat) protein is Nucleolar protein 58 (Nop58).